The chain runs to 1481 residues: Cystic fibrosis transmembrane conductance regulator (1481 aa).

Topologically, residues 1 to 77 (MQRSPLEKAS…KLINALRRCF (77 aa)) are cytoplasmic. The helical transmembrane segment at 78-98 (FWRFMFYGILLYLGEVTKAVQ) threads the bilayer. The region spanning 81 to 365 (FMFYGILLYL…WAVQTWYDSL (285 aa)) is the ABC transmembrane type-1 1 domain. Residues 99–122 (PLLLGRIIASYDPDNKVERSIAIY) are Extracellular-facing. The chain crosses the membrane as a helical span at residues 123–146 (LGIGLCLLFIVRMLLLHPAIFGLH). Over 147-195 (HIGMQMRIAMFSLIYKKILKLSSRVLDKISIGQLVSLLSNNLNKFDEGL) the chain is Cytoplasmic. Residues 196-216 (ALAHFVWIAPLQVMLLMGLLW) form a helical membrane-spanning segment. Residues 217–222 (ELLQAS) are Extracellular-facing. Residues 223–243 (AFCGLGFLIVLALFQSGLGRM) traverse the membrane as a helical segment. Residues 244-298 (MMKYRDQRAGKINERLVITSEMIENIQSVKAYCWEEAMEKMIENLRQTELKLTRK) lie on the Cytoplasmic side of the membrane. The helical transmembrane segment at 299–319 (AAYVRYFNSSAFFFSGFFVVF) threads the bilayer. The Extracellular portion of the chain corresponds to 320–339 (LSVLPYALIKGIILRKIFTT). A helical transmembrane segment spans residues 340 to 358 (ISFCIVLRMAVTRQFPWAV). Topologically, residues 359 to 858 (QTWYDSLGAI…YLRYITVHKS (500 aa)) are cytoplasmic. Residues tryptophan 401, 458 to 465 (GSTGAGKT), and glutamine 493 contribute to the ATP site. Residues 423–646 (NGDNSLFFSN…RPDFSSKLMG (224 aa)) enclose the ABC transporter 1 domain. The S-palmitoyl cysteine moiety is linked to residue cysteine 524. 2 positions are modified to phosphoserine: serine 549 and serine 660. The segment at 654–831 (SAERRNSILT…EEINEEDLKE (178 aa)) is disordered R region. Phosphoserine; by PKA is present on serine 670. Serine 686 bears the Phosphoserine mark. Residue lysine 688 forms a Glycyl lysine isopeptide (Lys-Gly) (interchain with G-Cter in ubiquitin) linkage. A phosphoserine mark is found at serine 700 and serine 712. Threonine 717 carries the post-translational modification Phosphothreonine. Phosphoserine occurs at positions 737, 768, 790, 795, and 813. A helical membrane pass occupies residues 859-879 (LIFVLIWCLVIFLAEVAVSLV). One can recognise an ABC transmembrane type-1 2 domain in the interval 859 to 1155 (LIFVLIWCLV…AVNSSIDVDS (297 aa)). The Extracellular portion of the chain corresponds to 880-918 (LLWLLGNAPAYNKGNSTISANSSYAVIITSTSAYYVFYI). 2 N-linked (GlcNAc...) asparagine glycosylation sites follow: asparagine 894 and asparagine 900. A discontinuously helical transmembrane segment spans residues 919-939 (YVGVADTLLALGFFRGLPLVH). Residues 940-990 (TLITVSKILHHKMLHSVLQAPMSTLNALKAGGILNRFSKDIAILDDLLPLT) are Cytoplasmic-facing. Residues 991 to 1011 (IFDFIQLLLIVIGAVAVVSVL) traverse the membrane as a helical segment. Topologically, residues 1012 to 1013 (QP) are extracellular. The chain crosses the membrane as a helical span at residues 1014–1034 (YIFLATVPVIVTFIILRAYFL). At 1035–1095 (HTSQQLKQLE…TANWFLYLST (61 aa)) the chain is on the cytoplasmic side. Residues 1096–1116 (LRWFQMRIEMVFVIFFIVVTF) form a helical membrane-spanning segment. Residues 1117-1130 (ISILTTGEGEGQVG) lie on the Extracellular side of the membrane. A helical membrane pass occupies residues 1131 to 1151 (IILTLAMNIMGTLQWAVNSSI). At 1152 to 1481 (DVDSLMRSVS…TEEEVQDTRL (330 aa)) the chain is on the cytoplasmic side. Residues 1211 to 1444 (MTVKDLTARY…KSLFRQAISP (234 aa)) enclose the ABC transporter 2 domain. ATP is bound by residues tyrosine 1220 and 1245 to 1252 (GRTGSGKS). Positions 1387 to 1481 (RTLKQAFADC…TEEEVQDTRL (95 aa)) are interaction with GORASP2. The S-palmitoyl cysteine moiety is linked to residue cysteine 1396. Serine 1445 and serine 1457 each carry phosphoserine. A disordered region spans residues 1449–1481 (KLFPRRNSSKHKSRPPITALKEETEEEVQDTRL). A compositionally biased stretch (basic residues) spans 1450–1462 (LFPRRNSSKHKSR). Over residues 1471–1481 (ETEEEVQDTRL) the composition is skewed to acidic residues. A PDZ-binding motif is present at residues 1479–1481 (TRL).

It belongs to the ABC transporter superfamily. ABCC family. CFTR transporter (TC 3.A.1.202) subfamily. Monomer; does not require oligomerization for channel activity. May form oligomers in the membrane. Interacts with SLC26A3, SLC26A6 and NHERF1. Interacts with SHANK2. Interacts with MYO6. Interacts (via C-terminus) with GOPC (via PDZ domain); this promotes CFTR internalization and thereby decreases channel activity. Interacts with SLC4A7 through NHERF1. Found in a complex with MYO5B and RAB11A. Interacts with ANO1. Interacts with SLC26A8. Interacts with AHCYL1; the interaction increases CFTR activity. Interacts with CSE1L. The core-glycosylated form interacts with GORASP2 (via PDZ GRASP-type 1 domain) in respone to ER stress. Interacts with MARCHF2; the interaction leads to CFTR ubiqtuitination and degradation. Interacts with ADGRG2. N-glycosylated. Post-translationally, phosphorylated; cAMP treatment promotes phosphorylation and activates the channel. Dephosphorylation decreases the ATPase activity (in vitro). Phosphorylation at PKA sites activates the channel. Phosphorylation at PKC sites enhances the response to phosphorylation by PKA. Phosphorylated by AMPK; this inhibits channel activity. In terms of processing, ubiquitinated, leading to its degradation in the lysosome. Deubiquitination by USP10 in early endosomes enhances its endocytic recycling to the cell membrane. Ubiquitinated by RNF185 during ER stress. Ubiquitinated by MARCHF2.

It localises to the apical cell membrane. The protein resides in the early endosome membrane. The protein localises to the cell membrane. Its subcellular location is the recycling endosome membrane. It is found in the endoplasmic reticulum membrane. It localises to the nucleus. The enzyme catalyses ATP + H2O + closed Cl(-) channel = ADP + phosphate + open Cl(-) channel.. It carries out the reaction chloride(in) = chloride(out). The catalysed reaction is hydrogencarbonate(in) = hydrogencarbonate(out). It catalyses the reaction ATP + H2O = ADP + phosphate + H(+). Its function is as follows. Epithelial ion channel that plays an important role in the regulation of epithelial ion and water transport and fluid homeostasis. Mediates the transport of chloride ions across the cell membrane. Possesses an intrinsic ATPase activity and utilizes ATP to gate its channel; the passive flow of anions through the channel is gated by cycles of ATP binding and hydrolysis by the ATP-binding domains. The ion channel is also permeable to HCO(3)(-); selectivity depends on the extracellular chloride concentration. Exerts its function also by modulating the activity of other ion channels and transporters. Contributes to the regulation of the pH and the ion content of the epithelial fluid layer. Modulates the activity of the epithelial sodium channel (ENaC) complex, in part by regulating the cell surface expression of the ENaC complex. May regulate bicarbonate secretion and salvage in epithelial cells by regulating the transporter SLC4A7. Can inhibit the chloride channel activity of ANO1. Plays a role in the chloride and bicarbonate homeostasis during sperm epididymal maturation and capacitation. The sequence is that of Cystic fibrosis transmembrane conductance regulator from Microcebus murinus (Gray mouse lemur).